The primary structure comprises 354 residues: Probable protein phosphatase 2C 69 (354 aa).

Residues 33-279 (SYGYASSAGK…DNITCVVVRF (247 aa)) enclose the PPM-type phosphatase domain. Mn(2+) contacts are provided by Asp69, Gly70, Asp231, and Asp270. The tract at residues 289 to 354 (HISSSSSKEA…LERNSVTDKV (66 aa)) is disordered. Composition is skewed to polar residues over residues 309–328 (ISSN…PENV) and 336–348 (ASRS…LERN).

The protein belongs to the PP2C family. Requires Mg(2+) as cofactor. Mn(2+) is required as a cofactor.

It catalyses the reaction O-phospho-L-seryl-[protein] + H2O = L-seryl-[protein] + phosphate. The enzyme catalyses O-phospho-L-threonyl-[protein] + H2O = L-threonyl-[protein] + phosphate. This Arabidopsis thaliana (Mouse-ear cress) protein is Probable protein phosphatase 2C 69.